The chain runs to 368 residues: DNA replication and repair protein RecF (368 aa).

30-37 provides a ligand contact to ATP; sequence GNNAQGKT.

This sequence belongs to the RecF family.

The protein resides in the cytoplasm. Functionally, the RecF protein is involved in DNA metabolism; it is required for DNA replication and normal SOS inducibility. RecF binds preferentially to single-stranded, linear DNA. It also seems to bind ATP. This is DNA replication and repair protein RecF from Streptococcus pyogenes serotype M12 (strain MGAS2096).